A 372-amino-acid chain; its full sequence is 4-hydroxy-3-methylbut-2-en-1-yl diphosphate synthase (flavodoxin) (372 aa).

[4Fe-4S] cluster-binding residues include cysteine 270, cysteine 273, cysteine 305, and glutamate 312.

Belongs to the IspG family. [4Fe-4S] cluster serves as cofactor.

The catalysed reaction is (2E)-4-hydroxy-3-methylbut-2-enyl diphosphate + oxidized [flavodoxin] + H2O + 2 H(+) = 2-C-methyl-D-erythritol 2,4-cyclic diphosphate + reduced [flavodoxin]. The protein operates within isoprenoid biosynthesis; isopentenyl diphosphate biosynthesis via DXP pathway; isopentenyl diphosphate from 1-deoxy-D-xylulose 5-phosphate: step 5/6. Functionally, converts 2C-methyl-D-erythritol 2,4-cyclodiphosphate (ME-2,4cPP) into 1-hydroxy-2-methyl-2-(E)-butenyl 4-diphosphate. This is 4-hydroxy-3-methylbut-2-en-1-yl diphosphate synthase (flavodoxin) from Salmonella schwarzengrund (strain CVM19633).